The chain runs to 394 residues: Subtilisin-like protease 4 (394 aa).

The signal sequence occupies residues 1–17; it reads CLKTLSVFLAAFAAADA. The propeptide occupies 18–116; it reads RAVFKTQGHK…VEQDQVVRIS (99 aa). Residues 36–115 enclose the Inhibitor I9 domain; the sequence is YIVVMKDGVS…YVEQDQVVRI (80 aa). Residue asparagine 100 is glycosylated (N-linked (GlcNAc...) asparagine). A Peptidase S8 domain is found at 126 to 394; it reads SWGLGRVSHR…STTNRLLYNG (269 aa). Active-site charge relay system residues include aspartate 158 and histidine 189. 2 N-linked (GlcNAc...) asparagine glycosylation sites follow: asparagine 250 and asparagine 306. Serine 344 functions as the Charge relay system in the catalytic mechanism.

This sequence belongs to the peptidase S8 family.

Its subcellular location is the secreted. Secreted subtilisin-like serine protease with keratinolytic activity that contributes to pathogenicity. This chain is Subtilisin-like protease 4 (SUB4), found in Trichophyton equinum (Horse ringworm fungus).